The sequence spans 452 residues: Serine incorporator 2 (452 aa).

11 consecutive transmembrane segments (helical) span residues 5–25, 41–61, 96–116, 131–151, 158–178, 205–225, 236–256, 266–286, 319–339, 387–407, and 426–446; these read LGAC…PCIL, FFTV…SPGV, AVYR…LLMV, GFWF…FYIP, IWFY…LLLL, LFFF…LLFV, GKVF…VAIL, SGLL…WLAL, WDAP…FISL, FFHL…TNWY, and ICAS…PLLL.

It belongs to the TDE1 family.

The protein resides in the cell membrane. It catalyses the reaction a 1,2-diacyl-sn-glycero-3-phospho-L-serine(in) = a 1,2-diacyl-sn-glycero-3-phospho-L-serine(out). The enzyme catalyses a 1,2-diacyl-sn-glycero-3-phosphocholine(in) = a 1,2-diacyl-sn-glycero-3-phosphocholine(out). The catalysed reaction is a 1,2-diacyl-sn-glycero-3-phosphoethanolamine(in) = a 1,2-diacyl-sn-glycero-3-phosphoethanolamine(out). Non-ATP-dependent, non-specific lipid transporter for phosphatidylserine, phosphatidylcholine, and phosphatidylethanolamine. Functions as a scramblase that flips lipids in both directions across the membrane. In contrast to SERINC3 and SERINC5, has no effect on gammaretrovirus particles infectivity. The chain is Serine incorporator 2 (SERINC2) from Bos taurus (Bovine).